Consider the following 412-residue polypeptide: Sterol-4-alpha-carboxylate 3-dehydrogenase erg26, decarboxylating (412 aa).

NADP(+)-binding positions include 17-23, 89-90, and 111-113; these read GGCGFLG, DI, and TAT. Substrate is bound by residues Ser158 and Tyr188. NADP(+)-binding positions include Tyr188, Lys192, and 217 to 220; that span reads PAGI. Catalysis depends on Lys192, which acts as the Proton donor.

It belongs to the 3-beta-HSD family. As to quaternary structure, heterotetramer of erg25, erg26, erg27 and erg28. Erg28 acts as a scaffold to tether erg27 and other 4,4-demethylation-related enzymes, forming a demethylation enzyme complex, in the endoplasmic reticulum.

Its subcellular location is the endoplasmic reticulum membrane. It participates in steroid metabolism; ergosterol biosynthesis. In terms of biological role, sterol-C4-methyl oxidase; part of the third module of ergosterol biosynthesis pathway that includes the late steps of the pathway. Erg26 is a catalytic component of the C-4 demethylation complex that catalyzes the conversion of 4,4-dimethylfecosterol into fecosterol via 4-methylfecosterol. The third module or late pathway involves the ergosterol synthesis itself through consecutive reactions that mainly occur in the endoplasmic reticulum (ER) membrane. Firstly, the squalene synthase erg9 catalyzes the condensation of 2 farnesyl pyrophosphate moieties to form squalene, which is the precursor of all steroids. Squalene synthase is crucial for balancing the incorporation of farnesyl diphosphate (FPP) into sterol and nonsterol isoprene synthesis. Secondly, squalene is converted into lanosterol by the consecutive action of the squalene epoxidase erg1 and the lanosterol synthase erg7. Then, the delta(24)-sterol C-methyltransferase erg6 methylates lanosterol at C-24 to produce eburicol. Eburicol is the substrate of the sterol 14-alpha demethylase encoded by cyp51A and cyp51B, to yield 4,4,24-trimethyl ergosta-8,14,24(28)-trienol. The C-14 reductase erg24 then reduces the C14=C15 double bond which leads to 4,4-dimethylfecosterol. A sequence of further demethylations at C-4, involving the C-4 demethylation complex containing the C-4 methylsterol oxidases erg25A or erg25B, the sterol-4-alpha-carboxylate 3-dehydrogenase erg26 and the 3-keto-steroid reductase erg27, leads to the production of fecosterol via 4-methylfecosterol. The C-8 sterol isomerase erg2 then catalyzes the reaction which results in unsaturation at C-7 in the B ring of sterols and thus converts fecosterol to episterol. The sterol-C5-desaturase erg3B then catalyzes the introduction of a C-5 double bond in the B ring to produce 5-dehydroepisterol. The 2 other sterol-C5-desaturases, erg3A and erg3C, seem to be less important in ergosterol biosynthesis. The C-22 sterol desaturase erg5 further converts 5-dehydroepisterol into ergosta-5,7,22,24(28)-tetraen-3beta-ol by forming the C-22(23) double bond in the sterol side chain. Finally, ergosta-5,7,22,24(28)-tetraen-3beta-ol is substrate of the C-24(28) sterol reductases erg4A and erg4B to produce ergosterol. Possible alternative sterol biosynthetic pathways might exist from fecosterol to ergosterol, depending on the activities of the erg3 isoforms. The sequence is that of Sterol-4-alpha-carboxylate 3-dehydrogenase erg26, decarboxylating from Aspergillus fumigatus (strain ATCC MYA-4609 / CBS 101355 / FGSC A1100 / Af293) (Neosartorya fumigata).